We begin with the raw amino-acid sequence, 260 residues long: Snake venom serine protease homolog (260 aa).

The N-terminal stretch at 1–18 (MVLIRVLANLLILQLSYA) is a signal peptide. Residues 19-24 (QKASEL) constitute a propeptide that is removed on maturation. The Peptidase S1 domain occupies 25–251 (IIGGDECNIN…YTEWIRSIIA (227 aa)). 6 disulfides stabilise this stretch: C31-C165, C52-C68, C100-C258, C144-C212, C176-C191, and C202-C227. N83 is a glycosylation site (N-linked (GlcNAc...) asparagine).

It belongs to the peptidase S1 family. Snake venom subfamily. As to expression, expressed by the venom gland.

The protein localises to the secreted. Its function is as follows. Snake venom serine protease homolog that may act in the hemostasis system of the prey. This is Snake venom serine protease homolog from Bothrops jararacussu (Jararacussu).